We begin with the raw amino-acid sequence, 548 residues long: Eukaryotic translation initiation factor 3 subunit D (548 aa).

Position 53 is an N6-acetyllysine (Lys53). Ser161 carries the post-translational modification Phosphoserine. Residues 285–299 form an RNA gate region; it reads DFDLLTVSETANEPP. Residues 523–548 are disordered; it reads PDGTFSSDEDEEEEEEEEEEEEEEET. A phosphoserine mark is found at Ser528 and Ser529. The span at 529 to 548 shows a compositional bias: acidic residues; the sequence is SDEDEEEEEEEEEEEEEEET.

The protein belongs to the eIF-3 subunit D family. In terms of assembly, component of the eukaryotic translation initiation factor 3 (eIF-3) complex, which is composed of 13 subunits: EIF3A, EIF3B, EIF3C, EIF3D, EIF3E, EIF3F, EIF3G, EIF3H, EIF3I, EIF3J, EIF3K, EIF3L and EIF3M. The eIF-3 complex appears to include 3 stable modules: module A is composed of EIF3A, EIF3B, EIF3G and EIF3I; module B is composed of EIF3F, EIF3H, and EIF3M; and module C is composed of EIF3C, EIF3D, EIF3E, EIF3K and EIF3L. EIF3C of module C binds EIF3B of module A and EIF3H of module B, thereby linking the three modules. EIF3J is a labile subunit that binds to the eIF-3 complex via EIF3B. The eIF-3 complex interacts with RPS6KB1 under conditions of nutrient depletion. Mitogenic stimulation leads to binding and activation of a complex composed of MTOR and RPTOR, leading to phosphorylation and release of RPS6KB1 and binding of EIF4B to eIF-3. As to quaternary structure, (Microbial infection) Interacts with Norwalk virus VPg protein.

The protein resides in the cytoplasm. Functionally, mRNA cap-binding component of the eukaryotic translation initiation factor 3 (eIF-3) complex, a complex required for several steps in the initiation of protein synthesis of a specialized repertoire of mRNAs. The eIF-3 complex associates with the 40S ribosome and facilitates the recruitment of eIF-1, eIF-1A, eIF-2:GTP:methionyl-tRNAi and eIF-5 to form the 43S pre-initiation complex (43S PIC). The eIF-3 complex stimulates mRNA recruitment to the 43S PIC and scanning of the mRNA for AUG recognition. The eIF-3 complex is also required for disassembly and recycling of post-termination ribosomal complexes and subsequently prevents premature joining of the 40S and 60S ribosomal subunits prior to initiation. The eIF-3 complex specifically targets and initiates translation of a subset of mRNAs involved in cell proliferation, including cell cycling, differentiation and apoptosis, and uses different modes of RNA stem-loop binding to exert either translational activation or repression. In the eIF-3 complex, EIF3D specifically recognizes and binds the 7-methylguanosine cap of a subset of mRNAs. In terms of biological role, (Microbial infection) In case of FCV infection, plays a role in the ribosomal termination-reinitiation event leading to the translation of VP2. The chain is Eukaryotic translation initiation factor 3 subunit D from Homo sapiens (Human).